A 330-amino-acid polypeptide reads, in one-letter code: Solute carrier family 25 member 16 (330 aa).

Solcar repeat units lie at residues 32–118, 126–214, and 236–326; these read FYWL…YKTL, SGHV…LKSV, and LKTH…MKQF. 6 helical membrane-spanning segments follow: residues 33–52, 95–112, 132–149, 189–209, 242–262, and 297–317; these read YWLR…KTTV, GAMM…FMAF, LMAG…TYPL, GLMP…FTFG, LLCG…FDVT, and GLYR…AVAF.

The protein belongs to the mitochondrial carrier (TC 2.A.29) family. As to expression, mostly in thyroid, liver, lung, kidney and to a lesser extent in heart and skeletal muscle.

Its subcellular location is the mitochondrion inner membrane. Its function is as follows. May be involved in the transport of coenzyme A in the mitochondrial matrix. Very little is known about the physiological function of this carrier. The sequence is that of Solute carrier family 25 member 16 (SLC25A16) from Bos taurus (Bovine).